Here is a 579-residue protein sequence, read N- to C-terminus: Protein PLASTID MOVEMENT IMPAIRED 15 (579 aa).

4 coiled-coil regions span residues 90–161 (EVLK…NEEH), 188–216 (KVLD…IEIE), 383–419 (QKTK…KLES), and 481–501 (LMKT…EERE).

Belongs to the WEB family.

In terms of biological role, required for the chloroplast avoidance response under high intensity blue light. This avoidance response consists in the relocation of chloroplasts on the anticlinal side of exposed cells. This chain is Protein PLASTID MOVEMENT IMPAIRED 15 (PMI15), found in Arabidopsis thaliana (Mouse-ear cress).